We begin with the raw amino-acid sequence, 1620 residues long: DNA (cytosine-5)-methyltransferase 1 (1620 aa).

Residues 1-21 form a disordered region; it reads MPARTAPARVPALASPAGSLP. Residues 1–120 are interaction with DMAP1; that stretch reads MPARTAPARV…SRPTWRAEMA (120 aa). The tract at residues 1-145 is interaction with DNMT3A; it reads MPARTAPARV…RRSKSDSDTL (145 aa). 2 interaction with the PRC2/EED-EZH2 complex regions span residues 1-343 and 305-609; these read MPAR…SERK and APET…RVMG. Serine 15 bears the Phosphoserine mark. Positions 16-109 constitute a DMAP1-binding domain; sequence PAGSLPDHVR…TQKANGCPAN (94 aa). N6,N6-dimethyllysine; by EHMT2 is present on lysine 70. The disordered stretch occupies residues 96-369; it reads THTLTQKANG…PECGQHLDDP (274 aa). Positions 126–137 are enriched in basic residues; it reads PRSRPKPRGPRR. Position 138 is a phosphoserine (serine 138). N6-methyllysine; by SETD7 is present on lysine 139. Phosphoserine is present on serine 140. A compositionally biased stretch (polar residues) spans 144–155; sequence TLSVETSPSSVA. Serine 146 bears the Phosphoserine; by CK1 mark. The segment at 147-217 is interaction with DNMT3B; the sequence is VETSPSSVAT…SGAAAAVEKL (71 aa). A phosphoserine mark is found at serine 150 and serine 152. An interaction with PCNA region spans residues 161–172; the sequence is RQTTITAHFTKG. Threonine 164 is modified (phosphothreonine). N6-acetyllysine is present on lysine 171. Residues 175 to 202 carry the Nuclear localization signal motif; that stretch reads KRKPKEESEEGNSAESAAEERDQDKKRR. Residues 192–205 are compositionally biased toward basic and acidic residues; that stretch reads AEERDQDKKRRVVD. The residue at position 240 (serine 240) is a Phosphoserine. Basic and acidic residues-rich tracts occupy residues 246-267 and 286-300; these read RELS…PETH and QPRD…KEAE. Position 255 is an N6-acetyllysine; alternate (lysine 255). Lysine 255 is covalently cross-linked (Glycyl lysine isopeptide (Lys-Gly) (interchain with G-Cter in SUMO2); alternate). Positions 308 to 317 are enriched in acidic residues; sequence TPEDRDEDER. Residues 328–556 form a DNA replication foci-targeting sequence region; the sequence is KLESHTVPVQ…NVNRFTEDSL (229 aa). Zn(2+) contacts are provided by cysteine 359 and cysteine 362. Residue lysine 372 is modified to N6-acetyllysine. Positions 420 and 424 each coordinate Zn(2+). Residues serine 515 and serine 555 each carry the phosphoserine modification. A CXXC-type zinc finger spans residues 649-695; the sequence is NAMKRRRCGVCEVCQQPECGKCKACKDMVKFGGTGRSKQACLKRRCP. Zn(2+) is bound by residues cysteine 656, cysteine 659, cysteine 662, cysteine 667, cysteine 670, cysteine 673, cysteine 689, and cysteine 694. The interval 696 to 757 is autoinhibitory linker; that stretch reads NLAVKEADDD…TYYQKVSIDE (62 aa). An interaction with HDAC1 region spans residues 696 to 813; the sequence is NLAVKEADDD…TDTVLGATSD (118 aa). A compositionally biased stretch (acidic residues) spans 702–713; the sequence is ADDDEEADDDVS. A disordered region spans residues 702 to 732; that stretch reads ADDDEEADDDVSEMPSPKKLHQGKKKKQNKD. Phosphoserine occurs at positions 713 and 717. Positions 719 to 730 are enriched in basic residues; the sequence is KKLHQGKKKKQN. Serine 735 is subject to Phosphoserine. At lysine 752 the chain carries N6-acetyllysine. The 127-residue stretch at 758 to 884 folds into the BAH 1 domain; sequence EMLEVGDCVS…QEYARFESPP (127 aa). Serine 882 is modified (phosphoserine). Residues lysine 895, lysine 961, lysine 965, and lysine 979 each carry the N6-acetyllysine modification. Positions 976-1103 constitute a BAH 2 domain; sequence HYRKYSDYIK…SKTKNFEDPP (128 aa). The disordered stretch occupies residues 1097–1136; it reads KNFEDPPNHARSPGNKGKGKGKGKGKGKHQVSEPKEPEAA. Tandem repeats lie at residues 1112–1113, 1114–1115, 1116–1117, 1118–1119, 1120–1121, and 1122–1123. The interval 1112–1125 is 7 X 2 AA tandem repeats of K-G; it reads KGKGKGKGKGKGKH. The span at 1113–1125 shows a compositional bias: basic residues; that stretch reads GKGKGKGKGKGKH. N6-acetyllysine occurs at positions 1114, 1116, 1118, 1120, 1122, and 1124. Residues 1124–1125 form a 7; approximate repeat; it reads KH. An interaction with the PRC2/EED-EZH2 complex region spans residues 1124-1620; the sequence is KHQVSEPKEP…KAKEEAATKD (497 aa). The segment covering 1126-1135 has biased composition (basic and acidic residues); it reads QVSEPKEPEA. The SAM-dependent MTase C5-type domain occupies 1142-1601; sequence LRTLDVFSGC…LEIKLCLLSS (460 aa). A catalytic region spans residues 1142–1620; sequence LRTLDVFSGC…KAKEEAATKD (479 aa). Residues serine 1149, 1153-1154, 1171-1172, and 1193-1194 contribute to the S-adenosyl-L-methionine site; these read GL, EM, and DC. Residue cysteine 1229 is part of the active site. N6-acetyllysine is present on residues lysine 1352 and lysine 1418. Valine 1582 contributes to the S-adenosyl-L-methionine binding site. Lysine 1611 is covalently cross-linked (Glycyl lysine isopeptide (Lys-Gly) (interchain with G-Cter in SUMO2)).

Belongs to the class I-like SAM-binding methyltransferase superfamily. C5-methyltransferase family. In terms of assembly, homodimer. Forms a stable complex with E2F1, BB1 and HDAC1. Forms a complex with DMAP1 and HDAC2, with direct interaction. Interacts with the PRC2/EED-EZH2 complex. Probably part of a corepressor complex containing ZNF304, TRIM28, SETDB1 and DNMT1. Interacts with UHRF1; promoting its recruitment to hemimethylated DNA. Interacts with USP7, promoting its deubiquitination. Interacts with BAZ2A/TIP5. Interacts with PCNA. Interacts with MBD2 and MBD3. Interacts with DNMT3A and DNMT3B. Interacts with UBC9. Interacts with HDAC1. Interacts with CSNK1D. Interacts with SIRT7. Interacts with ZNF263; recruited to the SIX3 promoter along with other proteins involved in chromatin modification and transcriptional corepression where it contributes to transcriptional repression. Interacts with L3MBTL3 and DCAF5; the interaction requires DNMT1 methylation at Lys-139 and is necessary to target DNMT1 for ubiquitination by the CRL4-DCAF5 E3 ubiquitin ligase complex and proteasomal degradation. Interacts with PHF20L1; the interaction requires DNMT1 methylation at Lys-139 and protects DNMT1 from ubiquitination and proteasomal degradation. Sumoylated; sumoylation increases activity. In terms of processing, phosphorylation at Ser-146 by CK1 reduces DNA-binding activity. Post-translationally, acetylation on multiple lysines, mainly by KAT2B/PCAF, regulates cell cycle G(2)/M transition. Deacetylation of Lys-1352 and Lys-1418 by SIRT1 increases methyltransferase activity. Phosphorylation of Ser-152 by CDKs is important for enzymatic activity and protein stability. Phosphorylation of Ser-140 by AKT1 prevents methylation by SETD7 thereby increasing DNMT1 stability. In terms of processing, methylation at Lys-139 by SETD7 is necessary for the regulation of DNMT1 proteasomal degradation. Post-translationally, ubiquitinated by UHRF1; interaction with USP7 counteracts ubiquitination by UHRF1 by promoting deubiquitination and preventing degradation by the proteasome. Isoform 1 is expressed in embryonic stem cells and in somatic tissues. Isoform 2 is expressed in oocytes, preimplantation embryos, testis and in skeletal muscle during myogenesis.

The protein resides in the nucleus. The protein localises to the cytoplasm. It catalyses the reaction a 2'-deoxycytidine in DNA + S-adenosyl-L-methionine = a 5-methyl-2'-deoxycytidine in DNA + S-adenosyl-L-homocysteine + H(+). Its activity is regulated as follows. Allosterically regulated. The binding of 5-methylcytosine-containing DNA to the N-terminal parts of DNMT1 causes an allosteric activation of the catalytic domain by a direct interaction of its Zn-binding domain with the catalytic domain. Functionally, methylates CpG residues. Preferentially methylates hemimethylated DNA. Associates with DNA replication sites in S phase maintaining the methylation pattern in the newly synthesized strand, that is essential for epigenetic inheritance. Associates with chromatin during G2 and M phases to maintain DNA methylation independently of replication. It is responsible for maintaining methylation patterns established in development. DNA methylation is coordinated with methylation of histones. Mediates transcriptional repression by direct binding to HDAC2. In association with DNMT3B and via the recruitment of CTCFL/BORIS, involved in activation of BAG1 gene expression by modulating dimethylation of promoter histone H3 at H3K4 and H3K9. Probably forms a corepressor complex required for activated KRAS-mediated promoter hypermethylation and transcriptional silencing of tumor suppressor genes (TSGs) or other tumor-related genes in colorectal cancer (CRC) cells. Also required to maintain a transcriptionally repressive state of genes in undifferentiated embryonic stem cells (ESCs). Associates at promoter regions of tumor suppressor genes (TSGs) leading to their gene silencing. Promotes tumor growth. This chain is DNA (cytosine-5)-methyltransferase 1 (Dnmt1), found in Mus musculus (Mouse).